A 274-amino-acid polypeptide reads, in one-letter code: Dermonecrotic toxin LspiSicTox-betaIII1 G (274 aa).

Histidine 5 is an active-site residue. Mg(2+)-binding residues include glutamate 25 and aspartate 27. The active-site Nucleophile is histidine 41. Disulfide bonds link cysteine 45-cysteine 51 and cysteine 47-cysteine 189. An N-linked (GlcNAc...) asparagine glycan is attached at asparagine 66. Aspartate 85 is a binding site for Mg(2+).

The protein belongs to the arthropod phospholipase D family. Class II subfamily. The cofactor is Mg(2+). As to expression, expressed by the venom gland.

The protein resides in the secreted. The catalysed reaction is an N-(acyl)-sphingosylphosphocholine = an N-(acyl)-sphingosyl-1,3-cyclic phosphate + choline. It catalyses the reaction an N-(acyl)-sphingosylphosphoethanolamine = an N-(acyl)-sphingosyl-1,3-cyclic phosphate + ethanolamine. It carries out the reaction a 1-acyl-sn-glycero-3-phosphocholine = a 1-acyl-sn-glycero-2,3-cyclic phosphate + choline. The enzyme catalyses a 1-acyl-sn-glycero-3-phosphoethanolamine = a 1-acyl-sn-glycero-2,3-cyclic phosphate + ethanolamine. In terms of biological role, dermonecrotic toxins cleave the phosphodiester linkage between the phosphate and headgroup of certain phospholipids (sphingolipid and lysolipid substrates), forming an alcohol (often choline) and a cyclic phosphate. This toxin acts on sphingomyelin (SM). It may also act on ceramide phosphoethanolamine (CPE), lysophosphatidylcholine (LPC) and lysophosphatidylethanolamine (LPE), but not on lysophosphatidylserine (LPS), and lysophosphatidylglycerol (LPG). It acts by transphosphatidylation, releasing exclusively cyclic phosphate products as second products. Induces dermonecrosis, hemolysis, increased vascular permeability, edema, inflammatory response, and platelet aggregation. The sequence is that of Dermonecrotic toxin LspiSicTox-betaIII1 G from Loxosceles spinulosa (Recluse spider).